Consider the following 408-residue polypeptide: Phosphoglycerate kinase (408 aa).

Substrate is bound by residues 28–30 (DIN), Arg43, 66–69 (HQGR), Arg123, and Arg163. Residues Glu334 and 358–361 (GGHT) contribute to the ATP site.

The protein belongs to the phosphoglycerate kinase family. As to quaternary structure, monomer.

It localises to the cytoplasm. The catalysed reaction is (2R)-3-phosphoglycerate + ATP = (2R)-3-phospho-glyceroyl phosphate + ADP. It functions in the pathway carbohydrate degradation; glycolysis; pyruvate from D-glyceraldehyde 3-phosphate: step 2/5. This chain is Phosphoglycerate kinase, found in Pyrobaculum aerophilum (strain ATCC 51768 / DSM 7523 / JCM 9630 / CIP 104966 / NBRC 100827 / IM2).